Reading from the N-terminus, the 60-residue chain is U20-myrmicitoxin-Mri1a (60 aa).

The signal sequence occupies residues 1-24 (MKSVILLFAVIAIIVAVIIPAING). A propeptide spanning residues 25–34 (ESSSNPSANA) is cleaved from the precursor.

Belongs to the formicidae venom precursor-01 superfamily. As to expression, expressed by the venom gland.

The protein resides in the secreted. In terms of biological role, induces paralysis 5 minutes after injection into blowflies (L.caesar), and then death within 24 hours. May have antimicrobial properties, like most ant linear peptides. The sequence is that of U20-myrmicitoxin-Mri1a from Manica rubida (European giant red ant).